A 2877-amino-acid polypeptide reads, in one-letter code: Desmoplakin (2877 aa).

Residues 1–20 (MSCNGGSHPRINTLGRMTRA) form a disordered region. The segment at 1 to 591 (MSCNGGSHPR…DYMKTIEDLE (591 aa)) is interaction with PKP1, JUP, PKP2. Residues 1–1063 (MSCNGGSHPR…ANSENCNKNK (1063 aa)) form a globular 1 region. Ser22 and Ser62 each carry phosphoserine. Tyr65 carries the phosphotyrosine modification. Phosphothreonine is present on Thr70. A phosphoserine mark is found at Ser174, Ser175, and Ser183. Spectrin repeat units lie at residues 185–278 (SGWD…HLRQ) and 279–382 (LQNI…LKEN). One copy of the Spectrin 3a repeat lies at 383 to 453 (AAYFQFFEEA…NLVNKSKKIV (71 aa)). The SH3 domain maps to 465–522 (NKPIILRALCDYKQDQKIVHKGDECILKDNNERSKWYVTGPGGVDMLVPSVGLIIPPP). The stretch at 523–552 (NPLAVDLSCKIEQYYEAILALWNQLYINMK) is one Spectrin 3b repeat. 3 Spectrin repeats span residues 553–634 (SLVS…IQLP), 661–776 (VIET…SLCS), and 777–890 (VRAL…DLEK). Coiled coils occupy residues 1034–1280 (LKLK…AEEN), 1313–1354 (NARH…YENE), 1395–1443 (TSGY…QKAS), and 1473–1926 (KQSL…KLED). The segment at 1064 to 1952 (FLDQNLQKYQ…QKEIDKLRQR (889 aa)) is central fibrous rod domain. Phosphoserine is present on residues Ser1665, Ser1715, and Ser2031. The tract at residues 1953 to 2877 (PYGSHRETQT…YSFSSSSIGY (925 aa)) is globular 2. The interval 1967 to 2215 (TVDSSKLVFD…LLLSVQKRSM (249 aa)) is 4.5 X 38 AA tandem repeats (Domain A). 17 Plectin repeats span residues 2016–2052 (QPFLRGAGAIAGASASPKEKYSLVEAKRKKFITPEST), 2053–2090 (VMLLEAQAATGGIIDPHRNEKLTVDNAIARDLIDFDDR), 2091–2128 (QQIYTAEKAITGFDDPFSGKTVSVSEAIKKNLIDRETG), 2129–2166 (MRLLEAQLASGGVVDPVNSVFLPKDVALARGLIDRDLY), 2170–2204 (NDPRDSQKNFVDPITKKKVSYMQLRERCRIEPHTG), 2205–2240 (LLLLSVQKRSMSFQGIRQPVTVTELVDSGILRPSTV), 2258–2295 (KDFLQGSSCIAGIYNETTKQKLGIYEAMKIGLVRPGTA), 2296–2333 (LELLEAQAATGFIVDPVSNLRLPVEEAYKRGLVGIEFK), 2334–2371 (EKLLSAERAVTGYNDPETGNIISLFQAMNKELIEKGHG), 2372–2409 (IRLLEAQIATGGIIDPKESHRLPVDMAYKRGYFNEELS), 2413–2447 (SDPSDDTKGFFDPNTEENLTYLQLKERCIKDEETG), 2463–2500 (SQKNTLRKRRVVIVDPETNKEMSVQEAYKKGLIDYETF), 2514–2551 (TITGSDGSTRVVLVDRKTGSQYDIQDAIDKGLVDRKFF), 2617–2654 (SDPLEESSPIAAIFDTENLEKISITEGIERGIVDSITG), 2655–2692 (QRLLEAQACTGGIIHPTTGQKLSLQDAVSQGLIDQDMA), 2731–2768 (QRFLEFQFLTGGLVDPEVHGRISTEEAIRKGFIDGRAA), and 2769–2806 (QRLQDISSYAKILTCPKTKLKISYKDAMNRSMVEDITG). 3 positions are modified to phosphoserine: Ser2214, Ser2216, and Ser2232. Positions 2251 to 2453 (DEVGERIKDF…EETGLCLLPL (203 aa)) are 4.5 X 38 AA tandem repeats (Domain B). The LRR 15 repeat unit spans residues 2603-2628 (ISSVRNLTIRSSSLSDPLEESSPIAA). Residues 2616 to 2828 (LSDPLEESSP…GLPSPYNMSA (213 aa)) form a 4.5 X 38 AA tandem repeats (Domain C) region. 2 positions are modified to phosphoserine: Ser2817 and Ser2822. Residues 2817–2877 (SKGLPSPYNM…YSFSSSSIGY (61 aa)) are disordered. Position 2824 is a phosphotyrosine (Tyr2824). Residues Ser2827 and Ser2831 each carry the phosphoserine modification. The segment at 2830 to 2853 (GSRSGSRSGSRSGSRSGSRSGSRR) is 6 X 4 AA tandem repeats of G-S-R-[SR]. Residues 2830–2853 (GSRSGSRSGSRSGSRSGSRSGSRR) show a composition bias toward low complexity. Omega-N-methylarginine occurs at positions 2832 and 2853. Position 2855 is a phosphoserine (Ser2855). Thr2859 bears the Phosphothreonine mark. Low complexity predominate over residues 2862 to 2877 (SSYSYSYSFSSSSIGY). Ser2874 carries the phosphoserine modification.

It belongs to the plakin or cytolinker family. Homodimer. Interacts with COL17A1 (via cytoplasmic region). Interacts with DSC2. Interacts with PKP1. Interacts with PKP2. Interacts weakly with TMEM65. In terms of processing, phosphorylation at Ser-2855 increases association with intermediate filament cytokeratin, potentially facilitating interaction between desmosome junctions and intermediate filament architecture. As to expression, expressed in cardiomyocytes (at protein level).

It localises to the cell junction. It is found in the desmosome. The protein localises to the cell membrane. Its subcellular location is the cytoplasm. Major high molecular weight protein of desmosomes. Regulates profibrotic gene expression in cardiomyocytes via activation of the MAPK14/p38 MAPK signaling cascade and increase in TGFB1 protein abundance. In Rattus norvegicus (Rat), this protein is Desmoplakin.